Here is a 191-residue protein sequence, read N- to C-terminus: MSIKSDRWIRKMAEEHGMIEPYEPGQVRFNEAGDKLVSYGTSSYGYDVRCAREFKVFTNVHSAIVDPKNFDENSFIDIVGDECIIPPNSFALARTVEYFRIPRDVLTICLGKSTYARCGIIVNVTPLEPEWEGHVTLEFSNTTTLPARIYAGEGVAQMLFFQSDADDICETSYKDRGGKYQGQRGVTLPRT.

DCTP contacts are provided by residues 112 to 117 (KSTYAR), 136 to 138 (TLE), glutamine 157, tyrosine 173, and glutamine 183. Residue glutamate 138 is the Proton donor/acceptor of the active site.

This sequence belongs to the dCTP deaminase family. Homotrimer.

The enzyme catalyses dCTP + H2O + H(+) = dUTP + NH4(+). The protein operates within pyrimidine metabolism; dUMP biosynthesis; dUMP from dCTP (dUTP route): step 1/2. In terms of biological role, catalyzes the deamination of dCTP to dUTP. This chain is dCTP deaminase, found in Psychrobacter sp. (strain PRwf-1).